A 220-amino-acid polypeptide reads, in one-letter code: Fructose-6-phosphate aldolase (220 aa).

K85 serves as the catalytic Schiff-base intermediate with substrate.

Belongs to the transaldolase family. Type 3A subfamily. In terms of assembly, homodecamer.

Its subcellular location is the cytoplasm. It catalyses the reaction beta-D-fructose 6-phosphate = dihydroxyacetone + D-glyceraldehyde 3-phosphate. In terms of biological role, catalyzes the reversible formation of fructose 6-phosphate from dihydroxyacetone and D-glyceraldehyde 3-phosphate via an aldolization reaction. The protein is Fructose-6-phosphate aldolase of Salmonella agona (strain SL483).